A 910-amino-acid polypeptide reads, in one-letter code: MAEGVVLFGVHKLWELLNRESARLNGIGEQVDGLKRQLGRLQSLLKDADAKKHESERVRNFLEDVRDIVYDAEDIIESFLLNEFRAKEKGIKKHARRLACFLVDRRKFDSDIKGITKKISEVIGGMKSLGIQEIIDGASSMSLQERQREQKEIRQTFANSSESDLVGVEQSVEALAGHLVENDNIQVVSISGMGGIGKTTLARQVFHHDMVQRHFDGFAWVFVSQQFAQKHVWQRIWQELQPQNGDISHMDEHILQGKLFKLLETGRYLVVLDDVWKEEDWDRIKAVFPRKRGWKMLLTSRNEGVGIHADPKSFGFKTRILTPEESWKLCEKIVFHRRDETGTLSEVRVDEDMEAMGKEMVTCCGGLPLAVKVLGGLLATKHTVPEWKRVYDNIGPHLAGRSSLDDNLNSIYRVLSLSYEDLPMCLKHCFLYLAHFPEYYEIHVKRLFNYLAAEGIITSSDDGTTIQDKGEDYLEELARRNMITIDKNYMFLRKKHCQMHDMMREVCLSKAKEENFLEIFKVSTATSAINARSLSKSSRLSVHGGNALQSLGQTINKKVRSLLYFAFEDEFCILESTTPCFRSLPLLRVLDLSRVKFEGGKLPSSIGDLIHLRFLSLHRAWISHLPSSLRNLKLLLYLNLGFNGMVHVPNVLKEMQELRYLQLPMSMHDKTKLELSDLVNLESLMNFSTKYASVMDLLHMTKLRELSLFITDGSSDTLSSSLGQLRSLEVLHLYDRQEPRVAYHGGEIVLNCIHLKELELAIHMPRFPDQYLFHPHLSHIYLWCCSMEEDPIPILERLLHLKSVILTFGAFVGRRMVCSKGGFPQLCFLKLEELEELEEWIVEEGSMPLLRALTICNCRKLKLPGGINYITSLKELTIVGMKWKEKLVPGGEDYYKVQNIPNVQFINCDE.

Residues 22-60 are a coiled coil; the sequence is ARLNGIGEQVDGLKRQLGRLQSLLKDADAKKHESERVRN. In terms of domain architecture, NB-ARC spans 169–461; it reads EQSVEALAGH…AAEGIITSSD (293 aa). 3 LRR repeats span residues 584–609, 610–632, and 634–655; these read LPLL…IGDL, IHLR…LRNL, and LLLY…LKEM.

It belongs to the disease resistance NB-LRR family. RPP8/HRT subfamily.

The protein is Inactive disease susceptibility protein LOV1 (LOV1) of Arabidopsis thaliana (Mouse-ear cress).